The chain runs to 450 residues: Ig mu chain C region (450 aa).

This Canis lupus familiaris (Dog) protein is Ig mu chain C region.